Consider the following 230-residue polypeptide: 7-cyano-7-deazaguanine synthase (230 aa).

14-24 (LSGGLDSTTTL) lines the ATP pocket. Residues Cys-194, Cys-204, Cys-207, and Cys-210 each coordinate Zn(2+).

The protein belongs to the QueC family. The cofactor is Zn(2+).

It catalyses the reaction 7-carboxy-7-deazaguanine + NH4(+) + ATP = 7-cyano-7-deazaguanine + ADP + phosphate + H2O + H(+). It functions in the pathway purine metabolism; 7-cyano-7-deazaguanine biosynthesis. Catalyzes the ATP-dependent conversion of 7-carboxy-7-deazaguanine (CDG) to 7-cyano-7-deazaguanine (preQ(0)). In Ruthia magnifica subsp. Calyptogena magnifica, this protein is 7-cyano-7-deazaguanine synthase.